A 151-amino-acid chain; its full sequence is Transcriptional repressor NrdR (151 aa).

The segment at 3–34 is a zinc-finger region; that stretch reads CPYCAYGESKVVDSRSTEDGSSIRRRRECLKC. The ATP-cone domain maps to 49–139; the sequence is ILVIKKNMSR…VYRQFKDINT (91 aa).

This sequence belongs to the NrdR family. Requires Zn(2+) as cofactor.

In terms of biological role, negatively regulates transcription of bacterial ribonucleotide reductase nrd genes and operons by binding to NrdR-boxes. The sequence is that of Transcriptional repressor NrdR from Clostridium botulinum (strain ATCC 19397 / Type A).